The chain runs to 225 residues: Urease accessory protein UreE (225 aa).

2 stretches are compositionally biased toward basic and acidic residues: residues His-189–Gly-202 and Asn-212–Arg-225. The segment at His-189–Arg-225 is disordered.

This sequence belongs to the UreE family.

The protein resides in the cytoplasm. Its function is as follows. Involved in urease metallocenter assembly. Binds nickel. Probably functions as a nickel donor during metallocenter assembly. This chain is Urease accessory protein UreE, found in Edwardsiella ictaluri.